A 452-amino-acid polypeptide reads, in one-letter code: Phosphoglucosamine mutase (452 aa).

Serine 105 functions as the Phosphoserine intermediate in the catalytic mechanism. The Mg(2+) site is built by serine 105, aspartate 244, aspartate 246, and aspartate 248. Residue serine 105 is modified to Phosphoserine.

This sequence belongs to the phosphohexose mutase family. It depends on Mg(2+) as a cofactor. Post-translationally, activated by phosphorylation.

It catalyses the reaction alpha-D-glucosamine 1-phosphate = D-glucosamine 6-phosphate. Functionally, catalyzes the conversion of glucosamine-6-phosphate to glucosamine-1-phosphate. The protein is Phosphoglucosamine mutase of Blochmanniella floridana.